The following is a 545-amino-acid chain: EH domain-containing protein 1 (545 aa).

EF-hand domains follow at residues 14 to 49 and 50 to 83; these read ENQMIYKEWFEFSDSDGDGRITGNDAIKFFTMSNLP and RPELKQIWAIADSKRQGYLGFKEFIVAMQLVSLA. The EH domain maps to 15-93; sequence NQMIYKEWFE…QTGHEISHEV (79 aa). Positions 27, 29, 31, 33, 38, 61, 67, and 72 each coordinate Ca(2+). In terms of domain architecture, Dynamin-type G spans 194 to 429; that stretch reads FDAKPMVMLL…DLLADLKDIP (236 aa). Positions 204-211 are G1 motif; it reads GQYSTGKT. 204 to 211 is a GTP binding site; the sequence is GQYSTGKT. A G2 motif region spans residues 230 to 231; it reads EP. The interval 292–295 is G3 motif; sequence DTPG. GTP contacts are provided by residues 309 to 313 and lysine 359; that span reads DFTGV. The G4 motif stretch occupies residues 358–361; sequence NKAD. Position 382 (valine 382) is a region of interest, G5 motif. Residue 395-398 coordinates GTP; that stretch reads SFSD. Positions 467 to 490 form a coiled coil; that stretch reads KAKAQQKLIDNLEDEFGKVQREHH.

Belongs to the TRAFAC class dynamin-like GTPase superfamily. Dynamin/Fzo/YdjA family. EHD subfamily. As to quaternary structure, homooligomer, and heterooligomer with EHD2.

The protein localises to the endosome membrane. The protein resides in the cell membrane. It is found in the cytoplasm. The catalysed reaction is GTP + H2O = GDP + phosphate + H(+). Its function is as follows. Involved in endocytosis positive regulation. Acts in early endocytic membrane fusion and membrane trafficking of recycling endosomes. Confers salt tolerance. This Arabidopsis thaliana (Mouse-ear cress) protein is EH domain-containing protein 1.